The chain runs to 85 residues: Contulakin-Lt2 (85 aa).

The N-terminal stretch at 1 to 22 (MQMAYWVMVMMMVGITAPLSEG) is a signal peptide. A propeptide spanning residues 23-61 (RKLNDAIRGLVPNDLTPQLLQSLVSRRHRVFHLDNTYLK) is cleaved from the precursor. A disulfide bond links C65 and C70. Positions 76–85 (RRRDLKKRNK) are excised as a propeptide.

It belongs to the conotoxin C superfamily. In terms of tissue distribution, expressed by the venom duct.

The protein resides in the secreted. Functionally, acts as an agonist of neurotensin receptors. It binds to human neurotensin type 1 receptor (NTSR1), rat neurotensin types 1 and 2 receptors (NTSR1/NTSR2) and mouse neurotensin type 3 receptor (SORT1). This chain is Contulakin-Lt2, found in Conus litteratus (Lettered cone).